We begin with the raw amino-acid sequence, 424 residues long: MTQMEEARKGNITPEMEEVARKENLDIQMLIRGIANGRIVIPSNINRESSPCGIGENLSTKINANIGSSSKMEDIELEVDKALAAVEYGADAVMDLSTGPMLRDVRKAVLEAVDVPVGTVPIYEAGVEAFMSDGAVVDMDEDDMFRAIENQARDGVDFMTVHSGITLETVERAQRSGRIMGIVSRGGAFLAAWIMQNQEENPLYSNYEYLLEVAYEYDVTLSLGDGLRPGCLADASDIPQISELLTLAELVERARDADVQCMVEGPGHMPLDQIAANMKIQKEVCDGAPFYVLGPIVTDMAPGYDHISAAIGGAVAAMNGADFLCYVTPAEHLAIPGVQDVIEGVIASRIAAQAADAARKLPGAWDSELEMADARRSFDWDKQFKLAFDSKKPYEYRMQCPIEDSEMCSMCGEYCALRILREDR.

Residues Asn65, Met94, Tyr123, His162, Ser184 to Gly186, Asp225 to Arg228, and Glu264 contribute to the substrate site. His268 contacts Zn(2+). Tyr291 is a binding site for substrate. His332 lines the Zn(2+) pocket. [4Fe-4S] cluster contacts are provided by Cys408, Cys411, and Cys415.

It belongs to the ThiC family. [4Fe-4S] cluster is required as a cofactor.

It carries out the reaction 5-amino-1-(5-phospho-beta-D-ribosyl)imidazole + S-adenosyl-L-methionine = 4-amino-2-methyl-5-(phosphooxymethyl)pyrimidine + CO + 5'-deoxyadenosine + formate + L-methionine + 3 H(+). The protein operates within cofactor biosynthesis; thiamine diphosphate biosynthesis. In terms of biological role, catalyzes the synthesis of the hydroxymethylpyrimidine phosphate (HMP-P) moiety of thiamine from aminoimidazole ribotide (AIR) in a radical S-adenosyl-L-methionine (SAM)-dependent reaction. In Methanothermobacter thermautotrophicus (strain ATCC 29096 / DSM 1053 / JCM 10044 / NBRC 100330 / Delta H) (Methanobacterium thermoautotrophicum), this protein is Phosphomethylpyrimidine synthase 2.